The chain runs to 319 residues: Ester hydrolase C11orf54 homolog (319 aa).

The Zn(2+) site is built by H270, H272, and H282.

Monomer. Zn(2+) is required as a cofactor.

It localises to the nucleus. The protein localises to the cytoplasm. Functionally, exhibits ester hydrolase activity on the substrate p-nitrophenyl acetate, in vitro. May regulate DNA damage and repair by regulating HIF1A degradation via chaperone-mediated autophagy (CMA). The protein is Ester hydrolase C11orf54 homolog of Danio rerio (Zebrafish).